The chain runs to 65 residues: Large ribosomal subunit protein bL35 (65 aa).

Residues 1 to 30 are disordered; that stretch reads MPKMKTNRGAAKRFRKTASGRFKSKQSHLR. Positions 10–30 are enriched in basic residues; the sequence is AAKRFRKTASGRFKSKQSHLR.

Belongs to the bacterial ribosomal protein bL35 family.

In Pseudoalteromonas atlantica (strain T6c / ATCC BAA-1087), this protein is Large ribosomal subunit protein bL35.